Consider the following 497-residue polypeptide: Putative aldehyde dehydrogenase AldA (497 aa).

Residue 213–219 coordinates NAD(+); that stretch reads GKGSESG. Residues Glu257 and Cys291 contribute to the active site.

This sequence belongs to the aldehyde dehydrogenase family.

The enzyme catalyses an aldehyde + NAD(+) + H2O = a carboxylate + NADH + 2 H(+). In Staphylococcus epidermidis (strain ATCC 35984 / DSM 28319 / BCRC 17069 / CCUG 31568 / BM 3577 / RP62A), this protein is Putative aldehyde dehydrogenase AldA (aldA).